Reading from the N-terminus, the 975-residue chain is Probable dipeptidyl-aminopeptidase B (975 aa).

Basic and acidic residues predominate over residues 1–20 (MAEHGHNMWEEEPSKGRDSL). A disordered region spans residues 1–111 (MAEHGHNMWE…LSAASGSAGK (111 aa)). Topologically, residues 1–125 (MAEHGHNMWE…YRMMDRGLRR (125 aa)) are cytoplasmic. A compositionally biased stretch (low complexity) spans 22–31 (SDSSASTTSL). Residues 68–84 (LDDEDPLKDEASGDYDL) show a composition bias toward acidic residues. The helical; Signal-anchor for type II membrane protein transmembrane segment at 126–146 (VLIIASLVFVTAWVGGLFIYI) threads the bilayer. Residues 147 to 975 (SHKSYLHGSE…IDNAKPQGKR (829 aa)) lie on the Vacuolar side of the membrane. N-linked (GlcNAc...) asparagine glycosylation is found at Asn207, Asn397, and Asn622. Ser826 functions as the Charge relay system in the catalytic mechanism. Asn885 is a glycosylation site (N-linked (GlcNAc...) asparagine). Active-site charge relay system residues include Asp903 and His936.

This sequence belongs to the peptidase S9B family.

It is found in the vacuole membrane. The enzyme catalyses Release of an N-terminal dipeptide, Xaa-Yaa-|-Zaa-, from a polypeptide, preferentially when Yaa is Pro, provided Zaa is neither Pro nor hydroxyproline.. Type IV dipeptidyl-peptidase which removes N-terminal dipeptides sequentially from polypeptides having unsubstituted N-termini provided that the penultimate residue is proline. The chain is Probable dipeptidyl-aminopeptidase B (DAPB) from Grosmannia clavigera (strain kw1407 / UAMH 11150) (Blue stain fungus).